The primary structure comprises 321 residues: Ubiquitin carboxyl-terminal hydrolase ubh-4 (321 aa).

One can recognise a UCH catalytic domain in the interval 6 to 220 (SWCLIESDPG…ITFNLMALVP (215 aa)). Catalysis depends on cysteine 83, which acts as the Nucleophile. Histidine 158 acts as the Proton donor in catalysis. The ULD domain occupies 273–301 (NYTPFVIELMKILAKEGKLVGLVDNAYQA).

It belongs to the peptidase C12 family. Interacts with proteasome 19S subunit rpn-13. As to expression, highly expressed in intestine and to a lesser extent in other tissues including muscles and neurons.

The catalysed reaction is Thiol-dependent hydrolysis of ester, thioester, amide, peptide and isopeptide bonds formed by the C-terminal Gly of ubiquitin (a 76-residue protein attached to proteins as an intracellular targeting signal).. Functionally, ubiquitin-protein hydrolase involved both in the processing of ubiquitin precursors and of ubiquitinated proteins. This enzyme is a thiol protease that recognizes and hydrolyzes a peptide bond at the C-terminal glycine of ubiquitin. This chain is Ubiquitin carboxyl-terminal hydrolase ubh-4, found in Caenorhabditis elegans.